A 176-amino-acid polypeptide reads, in one-letter code: NAD(P)H-quinone oxidoreductase subunit J (176 aa).

2 stretches are compositionally biased toward polar residues: residues 1-12 and 20-30; these read MEKDSQATSSDT and ISQSLSKDGIP. A disordered region spans residues 1–30; it reads MEKDSQATSSDTSIEKEGVISQSLSKDGIP.

Belongs to the complex I 30 kDa subunit family. In terms of assembly, NDH-1 can be composed of about 15 different subunits; different subcomplexes with different compositions have been identified which probably have different functions.

The protein localises to the cellular thylakoid membrane. The catalysed reaction is a plastoquinone + NADH + (n+1) H(+)(in) = a plastoquinol + NAD(+) + n H(+)(out). It catalyses the reaction a plastoquinone + NADPH + (n+1) H(+)(in) = a plastoquinol + NADP(+) + n H(+)(out). In terms of biological role, NDH-1 shuttles electrons from an unknown electron donor, via FMN and iron-sulfur (Fe-S) centers, to quinones in the respiratory and/or the photosynthetic chain. The immediate electron acceptor for the enzyme in this species is believed to be plastoquinone. Couples the redox reaction to proton translocation, and thus conserves the redox energy in a proton gradient. Cyanobacterial NDH-1 also plays a role in inorganic carbon-concentration. The protein is NAD(P)H-quinone oxidoreductase subunit J of Prochlorococcus marinus (strain AS9601).